We begin with the raw amino-acid sequence, 185 residues long: MAAQKDQQKDAEAEGLSATTLLPKLIPSGAGREWLERRRATIRPWGSFVDQRRFSRPRNLGELCQRLVRNVEYYQSNYVFVFLGLILYCVVTSPMLLVALAVFFGACYILYLRTLQSKFVLFGREVSPAHQYALAGGVSFPFFWLAGAGSAVFWVLGATLVVIGSHAAFHQIEAVDGEELQMEPV.

At 1–78 the chain is on the cytoplasmic side; that stretch reads MAAQKDQQKD…RNVEYYQSNY (78 aa). The segment at 30 to 54 is required for interaction with prenylated RAB3A and VAMP2; sequence AGREWLERRRATIRPWGSFVDQRRF. The next 2 membrane-spanning stretches (helical) occupy residues 79–94 and 95–112; these read VFVF…VTSP and MLLV…ILYL. The Cytoplasmic portion of the chain corresponds to 113–131; sequence RTLQSKFVLFGREVSPAHQ. 2 consecutive transmembrane segments (helical) span residues 132 to 148 and 149 to 165; these read YALA…LAGA and GSAV…VIGS. Residues 165-185 are required for interaction with GDI1; sequence SHAAFHQIEAVDGEELQMEPV. Residues 166-185 are Cytoplasmic-facing; it reads HAAFHQIEAVDGEELQMEPV. The tract at residues 175-185 is required for interaction with prenylated RAB3A and VAMP2; that stretch reads VDGEELQMEPV. The interval 175-185 is homodimerization; sequence VDGEELQMEPV.

The protein belongs to the PRA1 family. As to quaternary structure, homodimer. Interacts with VAMP2 (synaptobrevin-2), prenylated Rab proteins, GDI1, NRDG1 and PCLO.

The protein resides in the cell membrane. Its subcellular location is the cytoplasm. The protein localises to the golgi apparatus. It localises to the cytoplasmic vesicle. It is found in the secretory vesicle. The protein resides in the synaptic vesicle. General Rab protein regulator required for vesicle formation from the Golgi complex. May control vesicle docking and fusion by mediating the action of Rab GTPases to the SNARE complexes. In addition it inhibits the removal of Rab GTPases from the membrane by GDI1. This Sus scrofa (Pig) protein is Prenylated Rab acceptor protein 1 (RABAC1).